Reading from the N-terminus, the 177-residue chain is Probable chemoreceptor glutamine deamidase CheD (177 aa).

The protein belongs to the CheD family.

The enzyme catalyses L-glutaminyl-[protein] + H2O = L-glutamyl-[protein] + NH4(+). Functionally, probably deamidates glutamine residues to glutamate on methyl-accepting chemotaxis receptors (MCPs), playing an important role in chemotaxis. The polypeptide is Probable chemoreceptor glutamine deamidase CheD (Pseudomonas syringae pv. syringae (strain B728a)).